The sequence spans 212 residues: Probable GTP-binding protein EngB (212 aa).

The 175-residue stretch at 27-201 folds into the EngB-type G domain; the sequence is GGIEIAFAGR…TRILSDWYQP (175 aa). GTP is bound by residues 35–42, 62–66, 80–83, 147–150, and 180–182; these read GRSNAGKS, GRTQL, DLPG, TKAD, and FSS. Mg(2+) contacts are provided by Ser42 and Thr64.

It belongs to the TRAFAC class TrmE-Era-EngA-EngB-Septin-like GTPase superfamily. EngB GTPase family. Requires Mg(2+) as cofactor.

Necessary for normal cell division and for the maintenance of normal septation. In Tolumonas auensis (strain DSM 9187 / NBRC 110442 / TA 4), this protein is Probable GTP-binding protein EngB.